A 214-amino-acid polypeptide reads, in one-letter code: Potassium-transporting ATPase KdpC subunit (214 aa).

The chain crosses the membrane as a helical span at residues 17–37 (LWVITALIYPFSMIAIGQILF).

Belongs to the KdpC family. As to quaternary structure, the system is composed of three essential subunits: KdpA, KdpB and KdpC.

The protein resides in the cell inner membrane. In terms of biological role, part of the high-affinity ATP-driven potassium transport (or Kdp) system, which catalyzes the hydrolysis of ATP coupled with the electrogenic transport of potassium into the cytoplasm. This subunit acts as a catalytic chaperone that increases the ATP-binding affinity of the ATP-hydrolyzing subunit KdpB by the formation of a transient KdpB/KdpC/ATP ternary complex. The sequence is that of Potassium-transporting ATPase KdpC subunit from Microcystis aeruginosa (strain NIES-843 / IAM M-2473).